A 334-amino-acid polypeptide reads, in one-letter code: DnaJ protein homolog 1 (334 aa).

The J domain maps to 4 to 68 (DFYKILGLER…KKRDIFDNYG (65 aa)). The residue at position 187 (Ser-187) is a Phosphoserine.

It is found in the cytoplasm. The sequence is that of DnaJ protein homolog 1 (DnaJ-1) from Drosophila melanogaster (Fruit fly).